A 134-amino-acid chain; its full sequence is Probable thionin-2.4 (134 aa).

Residues 1-24 (MEGKTLIVSVLIMSLFMAQNQVDA) form the signal peptide. Cystine bridges form between cysteine 27–cysteine 64, cysteine 28–cysteine 56, and cysteine 40–cysteine 50. Residues 71 to 134 (DILENTGDAV…KGSMNAVENA (64 aa)) constitute a propeptide, acidic domain.

The protein belongs to the plant thionin (TC 1.C.44) family.

The protein resides in the secreted. In terms of biological role, thionins are small plant proteins which are toxic to animal cells. They seem to exert their toxic effect at the level of the cell membrane. Their precise function is not known. The chain is Probable thionin-2.4 from Arabidopsis thaliana (Mouse-ear cress).